A 585-amino-acid chain; its full sequence is Eukaryotic translation initiation factor 3 subunit D (585 aa).

A compositionally biased stretch (basic and acidic residues) spans 43–60 (LGRMADWTGDGKDRDRGG). 2 disordered regions span residues 43 to 62 (LGRMADWTGDGKDRDRGGRQ) and 109 to 152 (RGGG…NRSA). Residues 109 to 130 (RGGGTVFRGRGQRGVGQRGGRA) show a composition bias toward gly residues. An RNA gate region spans residues 300–314 (SIDLVTVNENAADAP). Positions 560-585 (VPPNTFEEDDEAAEEQEEKAEEESEE) are disordered. Positions 565–585 (FEEDDEAAEEQEEKAEEESEE) are enriched in acidic residues.

It belongs to the eIF-3 subunit D family. Component of the eukaryotic translation initiation factor 3 (eIF-3) complex.

The protein localises to the cytoplasm. MRNA cap-binding component of the eukaryotic translation initiation factor 3 (eIF-3) complex, which is involved in protein synthesis of a specialized repertoire of mRNAs and, together with other initiation factors, stimulates binding of mRNA and methionyl-tRNAi to the 40S ribosome. The eIF-3 complex specifically targets and initiates translation of a subset of mRNAs involved in cell proliferation. In the eIF-3 complex, eif3d specifically recognizes and binds the 7-methylguanosine cap of a subset of mRNAs. The sequence is that of Eukaryotic translation initiation factor 3 subunit D from Neosartorya fischeri (strain ATCC 1020 / DSM 3700 / CBS 544.65 / FGSC A1164 / JCM 1740 / NRRL 181 / WB 181) (Aspergillus fischerianus).